Here is a 301-residue protein sequence, read N- to C-terminus: Ribosomal protein L11 methyltransferase (301 aa).

4 residues coordinate S-adenosyl-L-methionine: threonine 152, glycine 173, aspartate 195, and asparagine 236.

The protein belongs to the methyltransferase superfamily. PrmA family.

It localises to the cytoplasm. It carries out the reaction L-lysyl-[protein] + 3 S-adenosyl-L-methionine = N(6),N(6),N(6)-trimethyl-L-lysyl-[protein] + 3 S-adenosyl-L-homocysteine + 3 H(+). Its function is as follows. Methylates ribosomal protein L11. The chain is Ribosomal protein L11 methyltransferase from Dictyoglomus thermophilum (strain ATCC 35947 / DSM 3960 / H-6-12).